A 224-amino-acid chain; its full sequence is Ribonuclease 3 (224 aa).

In terms of domain architecture, RNase III spans 4–126; that stretch reads LDRLQHKIGY…IIGAMSLDSN (123 aa). Mg(2+) is bound at residue Glu-39. Residue Asp-43 is part of the active site. Mg(2+)-binding residues include Asp-112 and Glu-115. Residue Glu-115 is part of the active site. The DRBM domain maps to 153-223; sequence DPKTRLQEYL…AEQILKVLDI (71 aa).

The protein belongs to the ribonuclease III family. In terms of assembly, homodimer. It depends on Mg(2+) as a cofactor.

The protein localises to the cytoplasm. The enzyme catalyses Endonucleolytic cleavage to 5'-phosphomonoester.. Digests double-stranded RNA. Involved in the processing of primary rRNA transcript to yield the immediate precursors to the large and small rRNAs (23S and 16S). Processes some mRNAs, and tRNAs when they are encoded in the rRNA operon. Processes pre-crRNA and tracrRNA of type II CRISPR loci if present in the organism. The sequence is that of Ribonuclease 3 from Actinobacillus succinogenes (strain ATCC 55618 / DSM 22257 / CCUG 43843 / 130Z).